Reading from the N-terminus, the 364-residue chain is DNA polymerase IV (364 aa).

Residues 14-198 form the UmuC domain; that stretch reads IIHIDMDAFF…LPIEKFHGVG (185 aa). Asp18 and Asp116 together coordinate Mg(2+). Glu117 is a catalytic residue.

Belongs to the DNA polymerase type-Y family. In terms of assembly, monomer. It depends on Mg(2+) as a cofactor.

The protein resides in the cytoplasm. It catalyses the reaction DNA(n) + a 2'-deoxyribonucleoside 5'-triphosphate = DNA(n+1) + diphosphate. Poorly processive, error-prone DNA polymerase involved in untargeted mutagenesis. Copies undamaged DNA at stalled replication forks, which arise in vivo from mismatched or misaligned primer ends. These misaligned primers can be extended by PolIV. Exhibits no 3'-5' exonuclease (proofreading) activity. May be involved in translesional synthesis, in conjunction with the beta clamp from PolIII. This chain is DNA polymerase IV, found in Streptococcus pyogenes serotype M12 (strain MGAS2096).